We begin with the raw amino-acid sequence, 994 residues long: Leucine-rich repeat receptor-like kinase protein FLORAL ORGAN NUMBER1 (994 aa).

Residues methionine 1–alanine 17 form the signal peptide. 21 LRR repeats span residues alanine 73–leucine 93, aspartate 94–leucine 117, proline 118–glycine 141, phenylalanine 147–histidine 171, alanine 172–aspartate 194, leucine 195–leucine 219, leucine 244–leucine 268, glutamine 269–leucine 292, serine 293–leucine 316, asparagine 318–phenylalanine 340, alanine 341–asparagine 364, glycine 365–glycine 388, arginine 390–cysteine 412, lysine 413–leucine 436, glutamine 438–glycine 459, aspartate 460–leucine 483, proline 484–leucine 507, asparagine 509–cysteine 531, serine 533–leucine 555, lysine 556–methionine 579, and serine 581–valine 604. N-linked (GlcNAc...) asparagine glycosylation is found at asparagine 75, asparagine 98, asparagine 124, asparagine 129, and asparagine 159. N-linked (GlcNAc...) asparagine glycosylation occurs at asparagine 256. The N-linked (GlcNAc...) asparagine glycan is linked to asparagine 315. Asparagine 352 is a glycosylation site (N-linked (GlcNAc...) asparagine). 3 N-linked (GlcNAc...) asparagine glycosylation sites follow: asparagine 495, asparagine 509, and asparagine 514. Residues asparagine 562 and asparagine 578 are each glycosylated (N-linked (GlcNAc...) asparagine). N-linked (GlcNAc...) asparagine glycosylation is present at asparagine 606. Residues lysine 647–alanine 667 traverse the membrane as a helical segment. The Protein kinase domain occupies valine 704–serine 978. ATP is bound by residues isoleucine 710 to valine 718 and lysine 731. The active-site Proton acceptor is aspartate 828.

Belongs to the protein kinase superfamily. Ser/Thr protein kinase family. In terms of tissue distribution, expressed in shoot apical meristem, and after transition to the reproductive phase, detected in the inflorescence and the floral meristems. Expressed uniformly throughout the meristems. Expressed also in floral organ primordia, such as the palea, lemma, lodicules, stamens, carpels and ovules.

The protein resides in the membrane. It carries out the reaction L-seryl-[protein] + ATP = O-phospho-L-seryl-[protein] + ADP + H(+). The enzyme catalyses L-threonyl-[protein] + ATP = O-phospho-L-threonyl-[protein] + ADP + H(+). Its function is as follows. Receptor-like kinase protein that regulates the size of the floral meristem. In Oryza sativa subsp. japonica (Rice), this protein is Leucine-rich repeat receptor-like kinase protein FLORAL ORGAN NUMBER1 (FON1).